The primary structure comprises 459 residues: tRNA modification GTPase MnmE (459 aa).

Positions 21, 84, and 123 each coordinate (6S)-5-formyl-5,6,7,8-tetrahydrofolate. Residues 219–378 (GVTVALAGAV…LLVLLYNFVL (160 aa)) enclose the TrmE-type G domain. Residues 229–234 (NAGKSS), 248–254 (TEHPGTT), and 273–276 (DTAG) contribute to the GTP site. Mg(2+) contacts are provided by Ser-233 and Thr-254. Lys-459 is a binding site for (6S)-5-formyl-5,6,7,8-tetrahydrofolate.

Belongs to the TRAFAC class TrmE-Era-EngA-EngB-Septin-like GTPase superfamily. TrmE GTPase family. As to quaternary structure, homodimer. Heterotetramer of two MnmE and two MnmG subunits. K(+) is required as a cofactor.

The protein resides in the cytoplasm. In terms of biological role, exhibits a very high intrinsic GTPase hydrolysis rate. Involved in the addition of a carboxymethylaminomethyl (cmnm) group at the wobble position (U34) of certain tRNAs, forming tRNA-cmnm(5)s(2)U34. This Lawsonia intracellularis (strain PHE/MN1-00) protein is tRNA modification GTPase MnmE.